An 830-amino-acid chain; its full sequence is Envelope glycoprotein B (830 aa).

An N-terminal signal peptide occupies residues 1–19 (MSKMRVLFLAVFLMNSVLM). The Virion surface segment spans residues 20 to 688 (IYCDSDDYIR…GGVVSFLKNP (669 aa)). Intrachain disulfides connect Cys41–Cys482, Cys58–Cys438, Cys131–Cys197, and Cys290–Cys337. The involved in fusion and/or binding to host membrane stretch occupies residues 98-104 (SYRDVGV). Asn155 carries an N-linked (GlcNAc...) asparagine; by host glycan. The tract at residues 184–191 (GPLWLYST) is involved in fusion and/or binding to host membrane. 5 N-linked (GlcNAc...) asparagine; by host glycosylation sites follow: Asn247, Asn286, Asn329, Asn361, and Asn486. A disulfide bridge links Cys510 with Cys548. 2 hydrophobic membrane proximal region regions span residues 634–686 (IEAK…SFLK) and 644–685 (SYVN…VSFL). A helical transmembrane segment spans residues 689-709 (FGGGLMLILAIVVVVIIIVVF). Residues 710–830 (VRQKHVLSKP…GYKSVNVEEA (121 aa)) lie on the Intravirion side of the membrane. An Internalization motif motif is present at residues 822–825 (YKSV).

The protein belongs to the herpesviridae glycoprotein B family. Homotrimer; disulfide-linked. Binds to heparan sulfate proteoglycans. Interacts with gH/gL heterodimer. In terms of processing, a proteolytic cleavage by host furin generates two subunits that remain linked by disulfide bonds.

It is found in the virion membrane. The protein resides in the host cell membrane. Its subcellular location is the host endosome membrane. It localises to the host Golgi apparatus membrane. In terms of biological role, envelope glycoprotein that forms spikes at the surface of virion envelope. Essential for the initial attachment to heparan sulfate moieties of the host cell surface proteoglycans. Involved in fusion of viral and cellular membranes leading to virus entry into the host cell. Following initial binding to its host receptors, membrane fusion is mediated by the fusion machinery composed at least of gB and the heterodimer gH/gL. May be involved in the fusion between the virion envelope and the outer nuclear membrane during virion egress. This chain is Envelope glycoprotein B, found in Homo sapiens (Human).